A 353-amino-acid chain; its full sequence is Protein MGF 360-13L (353 aa).

This sequence belongs to the asfivirus MGF 360 family.

In terms of biological role, plays a role in virus cell tropism, and may be required for efficient virus replication in macrophages. The protein is Protein MGF 360-13L of African swine fever virus (isolate Warthog/Namibia/Wart80/1980) (ASFV).